Reading from the N-terminus, the 439-residue chain is Ribulose bisphosphate carboxylase/oxygenase activase 2, chloroplastic (439 aa).

Residues 1–58 (MATSVSTIGAANKAPLSLNNSVAGTSVPSTAFFGKTLKKVYGKGVSSPKVTNRSLRIA) constitute a chloroplast transit peptide. 169 to 176 (GGKGQGKS) is a binding site for ATP.

The protein belongs to the RuBisCO activase family.

The protein resides in the plastid. It localises to the chloroplast stroma. Functionally, activation of RuBisCO (ribulose-1,5-bisphosphate carboxylase/oxygenase; EC 4.1.1.39) involves the ATP-dependent carboxylation of the epsilon-amino group of lysine leading to a carbamate structure. The protein is Ribulose bisphosphate carboxylase/oxygenase activase 2, chloroplastic (RCA) of Nicotiana tabacum (Common tobacco).